The chain runs to 299 residues: Palmitoyltransferase ZDHHC3 (299 aa).

The Cytoplasmic segment spans residues 1–47 (MMLIPTHHFRDIERKPEYLQPEKCAPPPFPGPVGTMWFIRDGCGIAC). Tyr-18 carries the phosphotyrosine modification. Residues 48-68 (AIVTWFLVLYAEFVVLFVMLI) traverse the membrane as a helical segment. The Lumenal segment spans residues 69 to 72 (PSRD). Residues 73–93 (YAYSIINGIVFNLLAFLALAS) traverse the membrane as a helical segment. The Cytoplasmic segment spans residues 94-171 (HCRAMLTDPG…NCVGENNQKY (78 aa)). The DHHC domain maps to 128 to 254 (KCPKCCSIKP…DETGIEQLKK (127 aa)). Cys-146 carries the S-palmitoyl cysteine lipid modification. Residue Cys-157 is the S-palmitoyl cysteine intermediate of the active site. The chain crosses the membrane as a helical span at residues 172–192 (FVLFTMYIALISLHALIMVGF). Over 193–214 (HFLHCFEEDWTKCSSFSPPTTV) the chain is Lumenal. Residues 215–235 (ILLILLCFEALLFLIFTSVMF) traverse the membrane as a helical segment. The Cytoplasmic portion of the chain corresponds to 236 to 299 (GTQVHSICTD…GKADPYQYVV (64 aa)).

This sequence belongs to the DHHC palmitoyltransferase family. In terms of assembly, monomer. Homooligomers. The monomeric form has a higher catalytic activity. Forms heterooligomers with ZDHHC7. Interacts with TNFRSF10A. Phosphorylation by FGFR1 and SRC probably regulates the palmitoyltransferase activity. In terms of processing, autopalmitoylated.

It is found in the golgi apparatus membrane. The catalysed reaction is L-cysteinyl-[protein] + hexadecanoyl-CoA = S-hexadecanoyl-L-cysteinyl-[protein] + CoA. The enzyme catalyses L-cysteinyl-[protein] + tetradecanoyl-CoA = S-tetradecanoyl-L-cysteinyl-[protein] + CoA. It carries out the reaction L-cysteinyl-[protein] + octadecanoyl-CoA = S-octadecanoyl-L-cysteinyl-[protein] + CoA. Its function is as follows. Golgi-localized palmitoyltransferase that catalyzes the addition of palmitate onto various protein substrates. Has no stringent fatty acid selectivity and in addition to palmitate can also transfer onto target proteins myristate from tetradecanoyl-CoA and stearate from octadecanoyl-CoA. Plays an important role in G protein-coupled receptor signaling pathways involving GNAQ and potentially other heterotrimeric G proteins by regulating their dynamic association with the plasma membrane. Palmitoylates ITGA6 and ITGB4, thereby regulating the alpha-6/beta-4 integrin localization, expression and function in cell adhesion to laminin. Plays a role in the TRAIL-activated apoptotic signaling pathway most probably through the palmitoylation and localization to the plasma membrane of TNFRSF10A. In the brain, by palmitoylating the gamma subunit GABRG2 of GABA(A) receptors and regulating their postsynaptic accumulation, plays a role in synaptic GABAergic inhibitory function and GABAergic innervation. Palmitoylates the neuronal protein GAP43 which is also involved in the formation of GABAergic synapses. Palmitoylates NCDN thereby regulating its association with endosome membranes. Probably palmitoylates PRCD and is involved in its proper localization within the photoreceptor. Could mediate the palmitoylation of NCAM1 and regulate neurite outgrowth. Could palmitoylate DNAJC5 and regulate its localization to Golgi membranes. Also constitutively palmitoylates DLG4. May also palmitoylate SNAP25. Could palmitoylate the glutamate receptors GRIA1 and GRIA2 but this has not been confirmed in vivo. Could also palmitoylate the D(2) dopamine receptor DRD2. May also palmitoylate LAMTOR1, promoting its localization to lysosomal membranes. Palmitoylates the Toll-like receptor 9/TLR9 in the Golgi and thereby regulates TLR9 trafficking to endosomes. May palmitoylate CALHM1 and CALHM3 subunits of gustatory voltage-gated ion channels and modulate channel gating and kinetics. In Rattus norvegicus (Rat), this protein is Palmitoyltransferase ZDHHC3.